The chain runs to 20 residues: Thrombin-like enzyme Cdc SII (20 aa).

This sequence belongs to the peptidase S1 family. Snake venom subfamily. Monomer. As to expression, expressed by the venom gland.

The protein localises to the secreted. Its activity is regulated as follows. Strongly inhibited by PMSF and moderately inhibited by leupeptin. Not inhibited by EDTA, aprotinin, pepstatin, and bestatin. In terms of biological role, thrombin-like snake venom serine protease that coagulates human plasma and bovine fibrinogen by hydrolysis of the alpha chains (FGA) (minimum coagulation dose is 60 ug on fibrinogen). Has fibrinogenolytic activities, and degrades preferentially the Aalpha chain (FGA). Shows amidolytic activity toward N-benzoyl-L-Arg-p-nitroanilide, has a higher activity than Cdc SI. In vivo, intravenous injection induces defibrin(ogen)ation and a loss of the righting reflex and opisthotoxins, together with a typical gyroxin-like effect (18-20 minutes). Subcutaneous injection into the footpads induces moderate edema. Potentiates local hemorrhagic activity induced by metalloproteinases (BaP1). The protein is Thrombin-like enzyme Cdc SII of Crotalus durissus cumanensis (South American rattlesnake).